A 194-amino-acid chain; its full sequence is Molybdenum cofactor guanylyltransferase (194 aa).

Residues 12–14 (LAG), Lys25, Asn53, Asp70, and Asp100 each bind GTP. Residue Asp100 coordinates Mg(2+).

The protein belongs to the MobA family. In terms of assembly, monomer. Mg(2+) is required as a cofactor.

It is found in the cytoplasm. The enzyme catalyses Mo-molybdopterin + GTP + H(+) = Mo-molybdopterin guanine dinucleotide + diphosphate. Functionally, transfers a GMP moiety from GTP to Mo-molybdopterin (Mo-MPT) cofactor (Moco or molybdenum cofactor) to form Mo-molybdopterin guanine dinucleotide (Mo-MGD) cofactor. The protein is Molybdenum cofactor guanylyltransferase of Aliivibrio salmonicida (strain LFI1238) (Vibrio salmonicida (strain LFI1238)).